A 136-amino-acid chain; its full sequence is Glutamate mutase sigma subunit (136 aa).

The B12-binding domain maps to 3–136; the sequence is KKKIVIGVIG…IIDLKKDFKI (134 aa). Adenosylcob(III)alamin-binding positions include 13–17, H16, and 61–63; these read SDCHT and SSI.

Belongs to the methylaspartate mutase GlmS subunit family. Heterotetramer composed of 2 epsilon subunits (GlmE) and 2 sigma subunits (GlmS). GlmE exists as a homodimer and GlmS as a monomer. The cofactor is adenosylcob(III)alamin.

It carries out the reaction (2S,3S)-3-methyl-L-aspartate = L-glutamate. It participates in amino-acid degradation; L-glutamate degradation via mesaconate pathway; acetate and pyruvate from L-glutamate: step 1/4. Catalyzes the carbon skeleton rearrangement of L-glutamate to L-threo-3-methylaspartate ((2S,3S)-3-methylaspartate). In Fusobacterium nucleatum subsp. nucleatum (strain ATCC 25586 / DSM 15643 / BCRC 10681 / CIP 101130 / JCM 8532 / KCTC 2640 / LMG 13131 / VPI 4355), this protein is Glutamate mutase sigma subunit.